We begin with the raw amino-acid sequence, 92 residues long: Small ribosomal subunit protein uS19 (92 aa).

This sequence belongs to the universal ribosomal protein uS19 family.

In terms of biological role, protein S19 forms a complex with S13 that binds strongly to the 16S ribosomal RNA. In Bartonella henselae (strain ATCC 49882 / DSM 28221 / CCUG 30454 / Houston 1) (Rochalimaea henselae), this protein is Small ribosomal subunit protein uS19.